The following is a 90-amino-acid chain: UPF0223 protein lmo1058 (90 aa).

This sequence belongs to the UPF0223 family.

This is UPF0223 protein lmo1058 from Listeria monocytogenes serovar 1/2a (strain ATCC BAA-679 / EGD-e).